A 617-amino-acid polypeptide reads, in one-letter code: V-type proton ATPase catalytic subunit A (617 aa).

257–264 (GAFGCGKT) is an ATP binding site.

This sequence belongs to the ATPase alpha/beta chains family. In terms of assembly, V-ATPase is a heteromultimeric enzyme composed of a peripheral catalytic V1 complex (components A to H) attached to an integral membrane V0 proton pore complex (components: a, c, c', c'', d, e, f and VOA1). Is a probable target for sumoylation.

It localises to the vacuole membrane. It catalyses the reaction ATP + H2O + 4 H(+)(in) = ADP + phosphate + 5 H(+)(out). In terms of biological role, catalytic subunit of the V1 complex of vacuolar(H+)-ATPase (V-ATPase), a multisubunit enzyme composed of a peripheral complex (V1) that hydrolyzes ATP and a membrane integral complex (V0) that translocates protons. V-ATPase is responsible for acidifying and maintaining the pH of intracellular compartments. Mediates oxidative stress response, filamentous growth, and plays an important role in virulence. This chain is V-type proton ATPase catalytic subunit A, found in Candida albicans (strain SC5314 / ATCC MYA-2876) (Yeast).